The primary structure comprises 516 residues: H/ACA ribonucleoprotein complex subunit DKC1 (516 aa).

The tract at residues 1 to 24 (MADGDGSSVKKRRKKDKRSLPDED) is disordered. Aspartate 123 functions as the Nucleophile in the catalytic mechanism. The PUA domain occupies 294 to 369 (HKRLVMKDSA…VVAKIKRVIM (76 aa)). Residues 422–516 (KKEAAKVPQA…KQKEVEESSE (95 aa)) are disordered. Positions 434–446 (EVERAPKRKRESE) are enriched in basic and acidic residues. The span at 453–464 (SPPPSPATPPPE) shows a compositional bias: pro residues. Residues 463 to 516 (PEELSKKEKKKKKKEKKAKEAAESGEEQVEVISESSAKKKKKKKKQKEVEESSE) adopt a coiled-coil conformation. Positions 469–478 (KEKKKKKKEK) are enriched in basic residues.

This sequence belongs to the pseudouridine synthase TruB family. As to quaternary structure, part of the H/ACA small nucleolar ribonucleoprotein (H/ACA snoRNP) complex, which contains NHP2/NOLA2, GAR1/NOLA1, NOP10/NOLA3, and DKC1/NOLA4, which is presumed to be the catalytic subunit. The complex contains a stable core formed by binding of one or two NOP10-DKC1 heterodimers to NHP2; GAR1 subsequently binds to this core via DKC1. The complex binds a box H/ACA small nucleolar RNA (snoRNA), which may target the specific site of modification within the RNA substrate.

Its subcellular location is the nucleus. The protein resides in the nucleolus. It localises to the cajal body. It catalyses the reaction uridine in 5S rRNA = pseudouridine in 5S rRNA. Its function is as follows. Catalytic subunit of H/ACA small nucleolar ribonucleoprotein (H/ACA snoRNP) complex, which catalyzes pseudouridylation of rRNA. This involves the isomerization of uridine such that the ribose is subsequently attached to C5, instead of the normal N1. Each rRNA can contain up to 100 pseudouridine ('psi') residues, which may serve to stabilize the conformation of rRNAs. Required for ribosome biogenesis and telomere maintenance. In Gallus gallus (Chicken), this protein is H/ACA ribonucleoprotein complex subunit DKC1 (DKC1).